We begin with the raw amino-acid sequence, 689 residues long: Glycine--tRNA ligase beta subunit (689 aa).

Belongs to the class-II aminoacyl-tRNA synthetase family. Tetramer of two alpha and two beta subunits.

Its subcellular location is the cytoplasm. It catalyses the reaction tRNA(Gly) + glycine + ATP = glycyl-tRNA(Gly) + AMP + diphosphate. This Salmonella dublin (strain CT_02021853) protein is Glycine--tRNA ligase beta subunit.